The chain runs to 256 residues: Imidazole glycerol phosphate synthase subunit HisF (256 aa).

Residues Asp-12 and Asp-131 contribute to the active site.

The protein belongs to the HisA/HisF family. As to quaternary structure, heterodimer of HisH and HisF.

The protein resides in the cytoplasm. The catalysed reaction is 5-[(5-phospho-1-deoxy-D-ribulos-1-ylimino)methylamino]-1-(5-phospho-beta-D-ribosyl)imidazole-4-carboxamide + L-glutamine = D-erythro-1-(imidazol-4-yl)glycerol 3-phosphate + 5-amino-1-(5-phospho-beta-D-ribosyl)imidazole-4-carboxamide + L-glutamate + H(+). The protein operates within amino-acid biosynthesis; L-histidine biosynthesis; L-histidine from 5-phospho-alpha-D-ribose 1-diphosphate: step 5/9. IGPS catalyzes the conversion of PRFAR and glutamine to IGP, AICAR and glutamate. The HisF subunit catalyzes the cyclization activity that produces IGP and AICAR from PRFAR using the ammonia provided by the HisH subunit. This is Imidazole glycerol phosphate synthase subunit HisF from Pseudomonas syringae pv. syringae (strain B728a).